Here is a 200-residue protein sequence, read N- to C-terminus: Somatotropin (200 aa).

Residues 1 to 22 (MARVLVVLSVVVASLFFSQGAT) form the signal peptide. His-38 is a Zn(2+) binding site. Cysteines 71 and 173 form a disulfide. Glu-182 is a binding site for Zn(2+). Cysteines 190 and 198 form a disulfide.

The protein belongs to the somatotropin/prolactin family.

The protein localises to the secreted. Functionally, growth hormone plays an important role in growth control and is involved in the regulation of several anabolic processes. Implicated as an osmoregulatory substance important for seawater adaptation. The chain is Somatotropin (gh) from Heteropneustes fossilis (Stinging catfish).